Consider the following 315-residue polypeptide: Aspartate carbamoyltransferase catalytic subunit (315 aa).

Carbamoyl phosphate is bound by residues Arg-64 and Thr-65. Lys-92 serves as a coordination point for L-aspartate. Carbamoyl phosphate is bound by residues Arg-114, His-142, and Gln-145. 2 residues coordinate L-aspartate: Arg-175 and Arg-229. Positions 270 and 271 each coordinate carbamoyl phosphate.

The protein belongs to the aspartate/ornithine carbamoyltransferase superfamily. ATCase family. As to quaternary structure, heterododecamer (2C3:3R2) of six catalytic PyrB chains organized as two trimers (C3), and six regulatory PyrI chains organized as three dimers (R2).

It catalyses the reaction carbamoyl phosphate + L-aspartate = N-carbamoyl-L-aspartate + phosphate + H(+). The protein operates within pyrimidine metabolism; UMP biosynthesis via de novo pathway; (S)-dihydroorotate from bicarbonate: step 2/3. Its function is as follows. Catalyzes the condensation of carbamoyl phosphate and aspartate to form carbamoyl aspartate and inorganic phosphate, the committed step in the de novo pyrimidine nucleotide biosynthesis pathway. In Bradyrhizobium diazoefficiens (strain JCM 10833 / BCRC 13528 / IAM 13628 / NBRC 14792 / USDA 110), this protein is Aspartate carbamoyltransferase catalytic subunit.